The following is a 135-amino-acid chain: 6,7-dimethyl-8-ribityllumazine synthase (135 aa).

5-amino-6-(D-ribitylamino)uracil-binding positions include Phe12, 44–46 (AYD), and 68–70 (CVI). 73 to 74 (AT) is a (2S)-2-hydroxy-3-oxobutyl phosphate binding site. His76 serves as the catalytic Proton donor. Leu101 contacts 5-amino-6-(D-ribitylamino)uracil. Arg116 contributes to the (2S)-2-hydroxy-3-oxobutyl phosphate binding site.

The protein belongs to the DMRL synthase family.

The enzyme catalyses (2S)-2-hydroxy-3-oxobutyl phosphate + 5-amino-6-(D-ribitylamino)uracil = 6,7-dimethyl-8-(1-D-ribityl)lumazine + phosphate + 2 H2O + H(+). It participates in cofactor biosynthesis; riboflavin biosynthesis; riboflavin from 2-hydroxy-3-oxobutyl phosphate and 5-amino-6-(D-ribitylamino)uracil: step 1/2. Catalyzes the formation of 6,7-dimethyl-8-ribityllumazine by condensation of 5-amino-6-(D-ribitylamino)uracil with 3,4-dihydroxy-2-butanone 4-phosphate. This is the penultimate step in the biosynthesis of riboflavin. In Methanoculleus marisnigri (strain ATCC 35101 / DSM 1498 / JR1), this protein is 6,7-dimethyl-8-ribityllumazine synthase.